The chain runs to 359 residues: Type-1 angiotensin II receptor (359 aa).

Residues M1–N25 lie on the Extracellular side of the membrane. N4 is a glycosylation site (N-linked (GlcNAc...) asparagine). Angiotensin II-binding residues include Q15 and D17. 2 disulfide bridges follow: C18–C274 and C101–C180. A helical membrane pass occupies residues Y26 to F55. Residues Y56–T61 are Cytoplasmic-facing. The helical transmembrane segment at V62–A89 threads the bilayer. Residues M90–N98 lie on the Extracellular side of the membrane. The helical transmembrane segment at Y99–D125 threads the bilayer. Residues R126–T141 are Cytoplasmic-facing. Residues M142–I165 form a helical membrane-spanning segment. Topologically, residues H166 to T190 are extracellular. R167 is an angiotensin II binding site. N176 carries N-linked (GlcNAc...) asparagine glycosylation. Angiotensin II contacts are provided by F182, H183, and Y184. N188 carries an N-linked (GlcNAc...) asparagine glycan. Residues L191–T216 traverse the membrane as a helical segment. K199 lines the angiotensin II pocket. At L217–F239 the chain is on the cytoplasmic side. Residues K240 to L268 form a helical membrane-spanning segment. The Extracellular portion of the chain corresponds to G269–D278. The chain crosses the membrane as a helical span at residues I279–F304. Residues L305 to E359 are Cytoplasmic-facing. Residues S335 to S352 are compositionally biased toward polar residues. The interval S335 to E359 is disordered. C355 is lipidated: S-palmitoyl cysteine.

The protein belongs to the G-protein coupled receptor 1 family. In terms of assembly, interacts with MAS1. Interacts with ARRB1. Interacts with FLNA (via filamin repeat 21); increases PKA-mediated phosphorylation of FLNA. C-terminal Ser or Thr residues may be phosphorylated. Adrenal, liver, aorta, kidney, lung, testis and heart.

It localises to the cell membrane. Functionally, receptor for angiotensin II, a vasoconstricting peptide, which acts as a key regulator of blood pressure and sodium retention by the kidney. The activated receptor in turn couples to G-alpha proteins G(q) (GNAQ, GNA11, GNA14 or GNA15) and thus activates phospholipase C and increases the cytosolic Ca(2+) concentrations, which in turn triggers cellular responses such as stimulation of protein kinase C. This is Type-1 angiotensin II receptor (AGTR1) from Canis lupus familiaris (Dog).